Reading from the N-terminus, the 405-residue chain is uncharacterized protein (405 aa).

12 helical membrane-spanning segments follow: residues 19–39 (IVSI…PLAV), 47–67 (VMGF…FATL), 85–105 (IVVF…TAGL), 107–127 (ASLP…LGIG), 156–176 (GIVT…FYHW), 178–198 (GLQA…LLAI), 224–244 (GMAL…ITLF), 252–272 (GAAF…LLFP), 283–303 (VAMI…VATM), 309–329 (IGVL…GVVA), 344–364 (TYTV…GLVM), and 366–386 (WAGV…ALLL).

It belongs to the major facilitator superfamily. YhhS family.

The protein resides in the cell inner membrane. This is an uncharacterized protein from Shigella flexneri.